The chain runs to 299 residues: Pectin lyase (299 aa).

Residues 1 to 18 (MKFSTFVSLGLTAITALA) form the signal peptide. Composition is skewed to low complexity over residues 82–91 (RSAATSPSSD) and 232–246 (SASA…TTRT). Disordered stretches follow at residues 82–105 (RSAA…PSPS) and 227–246 (SRGR…TTRT).

The protein belongs to the polysaccharide lyase 1 family.

The protein localises to the secreted. The catalysed reaction is Eliminative cleavage of (1-&gt;4)-alpha-D-galacturonan methyl ester to give oligosaccharides with 4-deoxy-6-O-methyl-alpha-D-galact-4-enuronosyl groups at their non-reducing ends.. This chain is Pectin lyase (PELA), found in Peyronellaea pinodes (Pea foot rot fungus).